Reading from the N-terminus, the 461-residue chain is Cysteine--tRNA ligase (461 aa).

A Zn(2+)-binding site is contributed by Cys29. The 'HIGH' region signature appears at 31–41 (MTVYDLCHLGH). Residues Cys213, His238, and Glu242 each coordinate Zn(2+). Residues 270–274 (KMSKS) carry the 'KMSKS' region motif. Residue Lys273 coordinates ATP.

It belongs to the class-I aminoacyl-tRNA synthetase family. As to quaternary structure, monomer. The cofactor is Zn(2+).

Its subcellular location is the cytoplasm. It carries out the reaction tRNA(Cys) + L-cysteine + ATP = L-cysteinyl-tRNA(Cys) + AMP + diphosphate. In Delftia acidovorans (strain DSM 14801 / SPH-1), this protein is Cysteine--tRNA ligase.